Reading from the N-terminus, the 499-residue chain is Potassium voltage-gated channel subfamily A member 2 (499 aa).

Residues 1–27 form a disordered region; the sequence is MTVATGDLTDGSVGFAGHPQDSYDPEP. Positions 1 to 125 are tetramerization domain; sequence MTVATGDLTD…YELGEEAMEI (125 aa). Residues 1 to 160 are Cytoplasmic-facing; sequence MTVATGDLTD…LLFEYPESSG (160 aa). A helical membrane pass occupies residues 161–182; it reads PARIIAIISVTVILISIVSFCL. Residues 183-221 are Extracellular-facing; sequence ETLPVFRDENEDMHGSGGNYYSYPNSTVRFQKSNTFTDP. N207 carries N-linked (GlcNAc...) asparagine glycosylation. Residues 222–243 form a helical membrane-spanning segment; sequence FFIVETLCIIWFSFEFLVRFLA. Residue C244 is the site of S-palmitoyl cysteine attachment. Topologically, residues 244–254 are cytoplasmic; it reads CPSKAVFFTNL. The chain crosses the membrane as a helical span at residues 255–275; sequence MNIIDIVAIIPYFITLGTELA. Topologically, residues 276–289 are extracellular; it reads EKTEDGQQGQQAMS. The helical; Voltage-sensor transmembrane segment at 290 to 310 threads the bilayer; sequence LAILRVIRLVRVFRIFKLSRH. Residues 311–325 lie on the Cytoplasmic side of the membrane; it reads SKGLQILGQTLNASM. Residues 312–325 form an S4-S5 linker region; it reads KGLQILGQTLNASM. Residues 326–347 traverse the membrane as a helical segment; the sequence is RELGLLIFFLFIGVILFSSAVF. Over 348–361 the chain is Extracellular; it reads FAEADERDSQFPSI. The helical intramembrane region spans 362-373; sequence PDAFWWAVVSMT. Residues 374–379 carry the Selectivity filter motif; it reads TVGYGD. An intramembrane segment occupies 374 to 381; it reads TVGYGDMV. At 382–388 the chain is on the extracellular side; it reads PTTIGGK. The helical transmembrane segment at 389–417 threads the bilayer; the sequence is IVGSLCAIAGVLTIALPVPVIVSNFNYFY. Residues 418–499 lie on the Cytoplasmic side of the membrane; the sequence is HRETEGEEQA…VNITKMLTDV (82 aa). The short motif at 497-499 is the PDZ-binding element; it reads TDV.

The protein belongs to the potassium channel family. A (Shaker) (TC 1.A.1.2) subfamily. Kv1.2/KCNA2 sub-subfamily. In terms of assembly, homotetramer and heterotetramer with other family members. In terms of tissue distribution, detected in tadpole brain and spinal cord.

Its subcellular location is the cell membrane. The enzyme catalyses K(+)(in) = K(+)(out). Voltage-gated potassium channel that mediates transmembrane potassium transport in excitable membranes, primarily in the brain and central nervous system. Prevents aberrant action potential firing and regulates neuronal output. Forms tetrameric potassium-selective channels through which potassium ions pass in accordance with their electrochemical gradient. The channel alternates between opened and closed conformations in response to the voltage difference across the membrane. Can form functional homotetrameric channels and heterotetrameric channels with other family members; the channels characteristics depend critically on the types of channel-forming alpha subunits that are present. Channel properties are modulated by cytoplasmic beta subunits that regulate the subcellular location of the alpha subunits. In vivo, membranes probably contain a mixture of heteromeric potassium channel complexes, making it difficult to assign currents observed in intact tissues to any particular potassium channel family member. Homotetrameric KCNA2 forms a delayed-rectifier potassium channel that opens in response to membrane depolarization, followed by slow spontaneous channel closure. Regulates neuronal excitability and plays a role as pacemaker in the regulation of neuronal action potentials. KCNA2-containing channels play a presynaptic role and prevent hyperexcitability and aberrant action potential firing. Response to toxins that are selective for KCNA2-containing potassium channels suggests that in Purkinje cells, dendritic subthreshold KCNA2-containing potassium channels prevent random spontaneous calcium spikes, suppressing dendritic hyperexcitability without hindering the generation of somatic action potentials, and thereby play an important role in motor coordination. Plays a role in the induction of long-term potentiation of neuron excitability in the CA3 layer of the hippocampus. This is Potassium voltage-gated channel subfamily A member 2 (kcna2) from Xenopus laevis (African clawed frog).